A 347-amino-acid chain; its full sequence is MTTKMFYDKDIDTKPLENKKIAVIGYGAQGHAQANNLRVSGFDVIMGLRPGKSFDSVKKDGFEVYSAAEATAQADVVMMETPDELQAAVWEKEVEPNLKAGSDLGFSHGFNIVYGLIKPNADINVMIIAPKGPGNIERRQFVEGGGIPSLYGVHQDPTGDTAEVAKAYAKGIGSGCAGILETTFEEETTEDLFGEQAVLCGGLTQLIEAGFNTLVEAGYSPELAYFETSHEMKMIVDLIFEGGFEKMRHDCSNTCEYGEMLNGPRIITEESKQGMRDVLKDIQDGTYAKKWLAEYNSGLKDLEKMRTEYKSGLYEQTGKKVRAMMPWISDADKYSTAADTEQFSAAK.

The region spanning 3 to 182 is the KARI N-terminal Rossmann domain; that stretch reads TKMFYDKDID…GSGCAGILET (180 aa). NADP(+)-binding positions include 26–29, arginine 49, serine 53, and 83–86; these read YGAQ and DELQ. Histidine 108 is a catalytic residue. Position 134 (glycine 134) interacts with NADP(+). Residues 183-328 form the KARI C-terminal knotted domain; that stretch reads TFEEETTEDL…KKVRAMMPWI (146 aa). Mg(2+) contacts are provided by aspartate 191, glutamate 195, glutamate 227, and glutamate 231. Serine 252 is a substrate binding site.

This sequence belongs to the ketol-acid reductoisomerase family. Mg(2+) serves as cofactor.

The catalysed reaction is (2R)-2,3-dihydroxy-3-methylbutanoate + NADP(+) = (2S)-2-acetolactate + NADPH + H(+). The enzyme catalyses (2R,3R)-2,3-dihydroxy-3-methylpentanoate + NADP(+) = (S)-2-ethyl-2-hydroxy-3-oxobutanoate + NADPH + H(+). It functions in the pathway amino-acid biosynthesis; L-isoleucine biosynthesis; L-isoleucine from 2-oxobutanoate: step 2/4. The protein operates within amino-acid biosynthesis; L-valine biosynthesis; L-valine from pyruvate: step 2/4. Its function is as follows. Involved in the biosynthesis of branched-chain amino acids (BCAA). Catalyzes an alkyl-migration followed by a ketol-acid reduction of (S)-2-acetolactate (S2AL) to yield (R)-2,3-dihydroxy-isovalerate. In the isomerase reaction, S2AL is rearranged via a Mg-dependent methyl migration to produce 3-hydroxy-3-methyl-2-ketobutyrate (HMKB). In the reductase reaction, this 2-ketoacid undergoes a metal-dependent reduction by NADPH to yield (R)-2,3-dihydroxy-isovalerate. This Leuconostoc mesenteroides subsp. cremoris protein is Ketol-acid reductoisomerase (NADP(+)).